Consider the following 259-residue polypeptide: UPF0246 protein PSPTO_1244 (259 aa).

This sequence belongs to the UPF0246 family.

The chain is UPF0246 protein PSPTO_1244 from Pseudomonas syringae pv. tomato (strain ATCC BAA-871 / DC3000).